The following is a 715-amino-acid chain: Polyribonucleotide nucleotidyltransferase (715 aa).

Aspartate 487 and aspartate 493 together coordinate Mg(2+). Residues 554–613 enclose the KH domain; sequence PRIETFKIATDKIREVIGTGGKVIREIVEKTGAKVNIDDDGTVKVASSDGESIKAAIKWI. Residues 623-691 enclose the S1 motif domain; that stretch reads NAIYDGTVVK…DRGKTRLSMK (69 aa). The disordered stretch occupies residues 696 to 715; it reads ETGEDLEAKQKAAEGATAAE.

It belongs to the polyribonucleotide nucleotidyltransferase family. The cofactor is Mg(2+).

The protein resides in the cytoplasm. The enzyme catalyses RNA(n+1) + phosphate = RNA(n) + a ribonucleoside 5'-diphosphate. Functionally, involved in mRNA degradation. Catalyzes the phosphorolysis of single-stranded polyribonucleotides processively in the 3'- to 5'-direction. The protein is Polyribonucleotide nucleotidyltransferase of Rhodopseudomonas palustris (strain BisB18).